The following is a 176-amino-acid chain: Disulfide bond formation protein B (176 aa).

Residues 1-11 (MLQLTTYRNLQ) lie on the Cytoplasmic side of the membrane. Residues 12 to 28 (VFLVIMTAIGMSFALFF) traverse the membrane as a helical segment. Topologically, residues 29–46 (LQRYMGFSPCPLCIFQRI) are periplasmic. Cys-38 and Cys-41 form a disulfide bridge. The helical transmembrane segment at 47-63 (GLMIMGGFALIAALFHP) threads the bilayer. Over 64–70 (KSMVIRL) the chain is Cytoplasmic. A helical transmembrane segment spans residues 71–88 (LLWLGSLAGIGWAAIVAG). Residues 89-145 (RHVWLQHLPADQVPSCGPGLDYWLDTLPMQQVLKEVFAGSGECASIEWTFLGLSIPE) lie on the Periplasmic side of the membrane. Cys-104 and Cys-131 are disulfide-bonded. The helical transmembrane segment at 146 to 164 (QSLILFSILILTHLLILWR) threads the bilayer. Over 165–176 (IVRPSTPKPLAR) the chain is Cytoplasmic.

Belongs to the DsbB family.

It localises to the cell inner membrane. Its function is as follows. Required for disulfide bond formation in some periplasmic proteins. Acts by oxidizing the DsbA protein. This chain is Disulfide bond formation protein B, found in Psychrobacter arcticus (strain DSM 17307 / VKM B-2377 / 273-4).